Consider the following 958-residue polypeptide: Glycine dehydrogenase (decarboxylating) (958 aa).

Lys703 is modified (N6-(pyridoxal phosphate)lysine).

Belongs to the GcvP family. In terms of assembly, the glycine cleavage system is composed of four proteins: P, T, L and H. It depends on pyridoxal 5'-phosphate as a cofactor.

It carries out the reaction N(6)-[(R)-lipoyl]-L-lysyl-[glycine-cleavage complex H protein] + glycine + H(+) = N(6)-[(R)-S(8)-aminomethyldihydrolipoyl]-L-lysyl-[glycine-cleavage complex H protein] + CO2. Functionally, the glycine cleavage system catalyzes the degradation of glycine. The P protein binds the alpha-amino group of glycine through its pyridoxal phosphate cofactor; CO(2) is released and the remaining methylamine moiety is then transferred to the lipoamide cofactor of the H protein. The sequence is that of Glycine dehydrogenase (decarboxylating) from Nitrobacter hamburgensis (strain DSM 10229 / NCIMB 13809 / X14).